Reading from the N-terminus, the 670-residue chain is E3 ubiquitin-protein ligase TRAF7 (670 aa).

Disordered regions lie at residues 1-37 (MSSG…FGPA) and 49-97 (GTST…SLHS). Composition is skewed to polar residues over residues 15–31 (GPSN…TRME) and 49–67 (GTST…STLA). S61, S88, and S91 each carry phosphoserine. The RING-type zinc finger occupies 131 to 165 (CQLCCSVFKDPVITTCGHTFCRRCALKSEKCPVDN). The TRAF-type zinc finger occupies 222–276 (HEGSCDYRPVRCPNNPSCPPLLRMNLEAHLKECEHIKCPHSKYGCTFIGNQDTYE). WD repeat units follow at residues 394-433 (GHQG…KCQK), 437-474 (GHDG…KVNT), 477-513 (AHDN…LKLK), 515-554 (ELTG…CIHV), 557-594 (TSGG…QVRT), 597-638 (GHVG…CTQT), and 641-669 (RHQG…KVWT).

The protein belongs to the WD repeat TRAF7 family. As to quaternary structure, homodimer. Interacts with MAP3K3 and promotes the kinase activity of this enzyme. Post-translationally, phosphorylated by MAP3K3. In terms of processing, ubiquitinates itself upon phosphorylation. In terms of tissue distribution, ubiquitously expressed with high levels in skeletal muscle, heart, colon, spleen, kidney, liver and placenta.

It is found in the cytoplasmic vesicle. Its subcellular location is the cytoplasm. The protein resides in the nucleus. The enzyme catalyses S-ubiquitinyl-[E2 ubiquitin-conjugating enzyme]-L-cysteine + [acceptor protein]-L-lysine = [E2 ubiquitin-conjugating enzyme]-L-cysteine + N(6)-ubiquitinyl-[acceptor protein]-L-lysine.. It participates in protein modification; protein ubiquitination. E3 ubiquitin and SUMO-protein ligase that plays a role in different biological processes such as innate immunity, inflammation or apoptosis. Potentiates MAP3K3-mediated activation of JUN/AP1 and DDIT3 transcriptional regulators. Negatively regulates MYB transcriptional activity by sequestering it to the cytosol via SUMOylation. Plays a role in the phosphorylation of MAPK1 and/or MAPK3, probably via its interaction with MAP3K3. Negatively regulates RLR-mediated innate immunity by promoting 'Lys-48'-linked ubiquitination of TBK1 through its RING domain to inhibit the cellular antiviral response. Promotes 'Lys-29'-linked polyubiquitination of NEMO/IKBKG and RELA leading to targeting these two proteins to lysosomal degradative pathways, reducing the transcriptional activity of NF-kappa-B. The protein is E3 ubiquitin-protein ligase TRAF7 (TRAF7) of Homo sapiens (Human).